The sequence spans 170 residues: Calcineurin subunit B type 2 (170 aa).

Gly-2 carries N-myristoyl glycine lipidation. EF-hand domains are found at residues 18-46 (DEIK…FTSM), 50-85 (QENP…FSVR), 87-122 (DEEQ…MVGD), and 128-163 (QLQQ…LEIH). The Ca(2+) site is built by Asp-63, Asp-65, Asp-67, Gln-69, Glu-74, Asp-100, Asp-102, Asp-104, Tyr-106, and Glu-111. The calcineurin A binding stretch occupies residues 131 to 136 (QLVDKT). 5 residues coordinate Ca(2+): Asp-141, Asp-143, Asp-145, Lys-147, and Glu-152.

Belongs to the calcineurin regulatory subunit family. Forms a complex composed of a calmodulin-dependent catalytic subunit (also known as calcineurin A) and a regulatory Ca(2+)-binding subunit (also known as calcineurin B). There are three catalytic subunits, each encoded by a separate gene (PPP3CA, PPP3CB, and PPP3CC) and two regulatory subunits which are also encoded by separate genes (PPP3R1 and PPP3R2). Interacts with SPATA33 (via PQIIIT motif).

It is found in the mitochondrion. Functionally, regulatory subunit of calcineurin, a calcium-dependent, calmodulin stimulated protein phosphatase. Confers calcium sensitivity. The polypeptide is Calcineurin subunit B type 2 (PPP3R2) (Bos taurus (Bovine)).